Reading from the N-terminus, the 469-residue chain is Glutamate--tRNA ligase (469 aa).

Residues 11 to 21 (PSPTGFIHLGN) carry the 'HIGH' region motif. Residues 243 to 247 (KMSKR) carry the 'KMSKS' region motif. Lys-246 is a binding site for ATP.

It belongs to the class-I aminoacyl-tRNA synthetase family. Glutamate--tRNA ligase type 1 subfamily. In terms of assembly, monomer.

It is found in the cytoplasm. It carries out the reaction tRNA(Glu) + L-glutamate + ATP = L-glutamyl-tRNA(Glu) + AMP + diphosphate. In terms of biological role, catalyzes the attachment of glutamate to tRNA(Glu) in a two-step reaction: glutamate is first activated by ATP to form Glu-AMP and then transferred to the acceptor end of tRNA(Glu). The sequence is that of Glutamate--tRNA ligase from Burkholderia ambifaria (strain MC40-6).